A 337-amino-acid chain; its full sequence is Glycerol-3-phosphate dehydrogenase [NAD(P)+] (337 aa).

Residues Trp-11, Arg-30, and Lys-102 each coordinate NADPH. Sn-glycerol 3-phosphate contacts are provided by Lys-102, Gly-138, and Ser-140. Residue Ala-142 participates in NADPH binding. Sn-glycerol 3-phosphate-binding residues include Lys-193, Asp-246, Ser-256, Arg-257, and Asn-258. The Proton acceptor role is filled by Lys-193. Arg-257 contributes to the NADPH binding site. NADPH is bound by residues Val-281 and Glu-283.

This sequence belongs to the NAD-dependent glycerol-3-phosphate dehydrogenase family.

It is found in the cytoplasm. The catalysed reaction is sn-glycerol 3-phosphate + NAD(+) = dihydroxyacetone phosphate + NADH + H(+). The enzyme catalyses sn-glycerol 3-phosphate + NADP(+) = dihydroxyacetone phosphate + NADPH + H(+). It participates in membrane lipid metabolism; glycerophospholipid metabolism. Functionally, catalyzes the reduction of the glycolytic intermediate dihydroxyacetone phosphate (DHAP) to sn-glycerol 3-phosphate (G3P), the key precursor for phospholipid synthesis. This Variovorax paradoxus (strain S110) protein is Glycerol-3-phosphate dehydrogenase [NAD(P)+].